We begin with the raw amino-acid sequence, 315 residues long: Probable cell division protein WhiA (315 aa).

The H-T-H motif DNA-binding region spans 280–313 (SLKELGDLLDPPLSKSGVAYRMRKLEESVKEILQ).

The protein belongs to the WhiA family.

Involved in cell division and chromosome segregation. The polypeptide is Probable cell division protein WhiA (Syntrophomonas wolfei subsp. wolfei (strain DSM 2245B / Goettingen)).